The chain runs to 91 residues: Acylphosphatase (91 aa).

Residues 5 to 91 enclose the Acylphosphatase-like domain; sequence RAHLRIYGRV…EGLEGFKVVG (87 aa). Active-site residues include Arg-20 and Asn-38.

It belongs to the acylphosphatase family.

It carries out the reaction an acyl phosphate + H2O = a carboxylate + phosphate + H(+). The polypeptide is Acylphosphatase (acyP) (Thermococcus kodakarensis (strain ATCC BAA-918 / JCM 12380 / KOD1) (Pyrococcus kodakaraensis (strain KOD1))).